Here is a 425-residue protein sequence, read N- to C-terminus: [Pyruvate dehydrogenase (acetyl-transferring)] kinase, mitochondrial (425 aa).

Phosphohistidine; by autocatalysis is present on H178. The region spanning 180 to 418 (NVAVEIALDI…DVYIHLNRLC (239 aa)) is the Histidine kinase domain. Residues 296–303 (EILKNSLR), D336, 355–356 (TT), and 379–384 (GFGFGL) contribute to the ATP site.

Belongs to the PDK/BCKDK protein kinase family.

The protein resides in the mitochondrion matrix. The catalysed reaction is L-seryl-[pyruvate dehydrogenase E1 alpha subunit] + ATP = O-phospho-L-seryl-[pyruvate dehydrogenase E1 alpha subunit] + ADP + H(+). Its function is as follows. Inhibits the mitochondrial pyruvate dehydrogenase complex by phosphorylation of the E1 alpha subunit, thus contributing to the regulation of glucose metabolism. This is [Pyruvate dehydrogenase (acetyl-transferring)] kinase, mitochondrial (pkp1) from Schizosaccharomyces pombe (strain 972 / ATCC 24843) (Fission yeast).